We begin with the raw amino-acid sequence, 315 residues long: Tyrosine recombinase XerC (315 aa).

The Core-binding (CB) domain occupies 1-103 (MITSFYAFLD…AIKSFARFCV (103 aa)). One can recognise a Tyr recombinase domain in the interval 124 to 306 (ELPSPLTYEQ…SMKLKKQIHD (183 aa)). Active-site residues include R164, K188, H258, R261, and H284. Residue Y293 is the O-(3'-phospho-DNA)-tyrosine intermediate of the active site.

Belongs to the 'phage' integrase family. XerC subfamily. In terms of assembly, forms a cyclic heterotetrameric complex composed of two molecules of XerC and two molecules of XerD.

Its subcellular location is the cytoplasm. Its function is as follows. Site-specific tyrosine recombinase, which acts by catalyzing the cutting and rejoining of the recombining DNA molecules. The XerC-XerD complex is essential to convert dimers of the bacterial chromosome into monomers to permit their segregation at cell division. It also contributes to the segregational stability of plasmids. In Chlamydia trachomatis serovar L2b (strain UCH-1/proctitis), this protein is Tyrosine recombinase XerC.